We begin with the raw amino-acid sequence, 295 residues long: Polyisoprenoid diphosphate/phosphate phosphohydrolase PLPP6 (295 aa).

Disordered stretches follow at residues 1–39 and 61–90; these read MPSPRRSMEGRPLGVSASSSSSSPGSPAHGGGGGGSRFE and SESPVHRRGSFPLAAAGPSQSPAPPLPEED. Residues 1-132 lie on the Cytoplasmic side of the membrane; the sequence is MPSPRRSMEG…ESSSWGSVRP (132 aa). Positions 16-27 are enriched in low complexity; the sequence is SASSSSSSPGSP. Phosphoserine is present on residues serine 26, serine 36, and serine 70. The chain crosses the membrane as a helical span at residues 133–153; that stretch reads LMKLLEISGHGIPWLLGTLYC. Over 154-164 the chain is Lumenal; that stretch reads LCRSDSWAGRE. Residues 165 to 185 traverse the membrane as a helical segment; sequence VLMNLLFALLLDLLLVALIKG. Residues 184–192 are phosphatase sequence motif I; it reads KGLVRRRRP. The Cytoplasmic portion of the chain corresponds to 186 to 228; the sequence is LVRRRRPAHNQMDMFVTLSVDKYSFPSGHATRAALMSRFILNH. Residues 211 to 214 are phosphatase sequence motif II; sequence PSGH. Histidine 214 (proton donors) is an active-site residue. A helical membrane pass occupies residues 229–249; sequence LVLAIPLRVLVVLWAFVLGLS. A phosphatase sequence motif III region spans residues 249–260; the sequence is SRVMLGRHNVTD. Residues 250–260 are Lumenal-facing; sequence RVMLGRHNVTD. Histidine 256 serves as the catalytic Nucleophile. The helical transmembrane segment at 261-281 threads the bilayer; the sequence is VAFGFFLGYMQYSIVDYCWLS. Over 282–295 the chain is Cytoplasmic; sequence PHNAPVLFLLWSQR.

Belongs to the PA-phosphatase related phosphoesterase family. Phosphorylation by PKC activates the phosphatase activity towards presqualene diphosphate. As to expression, widely expressed. Expressed in most organs, in particular gastrointestinal organs, spleen, placenta, kidney, thymus and brain.

The protein resides in the endoplasmic reticulum membrane. The protein localises to the nucleus envelope. It is found in the nucleus inner membrane. The catalysed reaction is presqualene diphosphate + H2O = presqualene phosphate + phosphate + H(+). It catalyses the reaction presqualene phosphate + H2O = presqualene alcohol + phosphate. It carries out the reaction (2E,6E)-farnesyl diphosphate + H2O = (2E,6E)-farnesyl phosphate + phosphate + H(+). The enzyme catalyses (2E,6E)-farnesyl phosphate + H2O = (2E,6E)-farnesol + phosphate. The catalysed reaction is (2E,6E,10E)-geranylgeranyl diphosphate + H2O = (2E,6E,10E)-geranylgeranyl phosphate + phosphate + H(+). It catalyses the reaction (2E,6E,10E)-geranylgeranyl phosphate + H2O = (2E,6E,10E)-geranylgeraniol + phosphate. It carries out the reaction (2E)-geranyl diphosphate + H2O = (2E)-geranyl phosphate + phosphate + H(+). The enzyme catalyses (2E)-geranyl phosphate + H2O = (2E)-geraniol + phosphate. The catalysed reaction is 1,2-dihexadecanoyl-sn-glycero-3-phosphate + H2O = 1,2-dihexadecanoyl-sn-glycerol + phosphate. Inhibited by propranolol. Not inhibited by N-ethylmaleimide or bromoenolactome. Its function is as follows. Magnesium-independent polyisoprenoid diphosphatase that catalyzes the sequential dephosphorylation of presqualene, farnesyl, geranyl and geranylgeranyl diphosphates. Functions in the innate immune response through the dephosphorylation of presqualene diphosphate which acts as a potent inhibitor of the signaling pathways contributing to polymorphonuclear neutrophils activation. May regulate the biosynthesis of cholesterol and related sterols by dephosphorylating presqualene and farnesyl diphosphate, two key intermediates in this biosynthetic pathway. May also play a role in protein prenylation by acting on farnesyl diphosphate and its derivative geranylgeranyl diphosphate, two precursors for the addition of isoprenoid anchors to membrane proteins. Has a lower activity towards phosphatidic acid (PA), but through phosphatidic acid dephosphorylation may participate in the biosynthesis of phospholipids and triacylglycerols. May also act on ceramide-1-P, lysophosphatidic acid (LPA) and sphing-4-enine 1-phosphate/sphingosine-1-phosphate. This chain is Polyisoprenoid diphosphate/phosphate phosphohydrolase PLPP6, found in Homo sapiens (Human).